A 447-amino-acid polypeptide reads, in one-letter code: Protein cortex (447 aa).

6 WD repeats span residues 108 to 148 (TYSY…IGHG), 149 to 188 (FAEY…KIMS), 198 to 237 (NMNC…ISWR), 281 to 325 (DSDW…VRDT), 344 to 380 (GELV…DQWG), and 384 to 423 (SGLD…NKMK). The D-box signature appears at 384-395 (SGLDRVRTMIFS).

The protein belongs to the WD repeat CORT family.

It is found in the cytoplasm. Functionally, controls wing pigmentation patterning by regulating scale cell development, thereby playing a key role in mimicry and crypsis. Probably acts as an activator of the anaphase promoting complex/cyclosome (APC/C) that promotes the ubiquitin ligase activity and substrate specificity of the APC/C. This is Protein cortex from Heliconius melpomene (Postman butterfly).